The chain runs to 155 residues: Medium/long-chain acyl-CoA thioesterase YigI (155 aa).

It belongs to the YigI thioesterase family.

Its subcellular location is the cytoplasm. The catalysed reaction is a fatty acyl-CoA + H2O = a fatty acid + CoA + H(+). It carries out the reaction a medium-chain fatty acyl-CoA + H2O = a medium-chain fatty acid + CoA + H(+). It catalyses the reaction a long-chain fatty acyl-CoA + H2O = a long-chain fatty acid + CoA + H(+). In terms of biological role, displays thioesterase activity against medium- to long-chain acyl-CoA substrates. Is involved in the thioesterase-dependent beta-oxidation pathway of (9Z,11E)-octadecadienoate (conjugated linoleic acid or CLA), along with TesB and FadM. The polypeptide is Medium/long-chain acyl-CoA thioesterase YigI (yigI) (Shigella flexneri).